The following is a 134-amino-acid chain: Transcription antitermination protein NusB (134 aa).

This sequence belongs to the NusB family.

In terms of biological role, involved in transcription antitermination. Required for transcription of ribosomal RNA (rRNA) genes. Binds specifically to the boxA antiterminator sequence of the ribosomal RNA (rrn) operons. The chain is Transcription antitermination protein NusB from Shewanella amazonensis (strain ATCC BAA-1098 / SB2B).